The primary structure comprises 161 residues: 6,7-dimethyl-8-ribityllumazine synthase (161 aa).

5-amino-6-(D-ribitylamino)uracil contacts are provided by residues Phe-23, 61-63 (SFE), and 85-87 (AVI). 90-91 (DT) is a (2S)-2-hydroxy-3-oxobutyl phosphate binding site. His-93 functions as the Proton donor in the catalytic mechanism. Phe-118 contributes to the 5-amino-6-(D-ribitylamino)uracil binding site. Arg-132 provides a ligand contact to (2S)-2-hydroxy-3-oxobutyl phosphate.

This sequence belongs to the DMRL synthase family.

It carries out the reaction (2S)-2-hydroxy-3-oxobutyl phosphate + 5-amino-6-(D-ribitylamino)uracil = 6,7-dimethyl-8-(1-D-ribityl)lumazine + phosphate + 2 H2O + H(+). It participates in cofactor biosynthesis; riboflavin biosynthesis; riboflavin from 2-hydroxy-3-oxobutyl phosphate and 5-amino-6-(D-ribitylamino)uracil: step 1/2. Catalyzes the formation of 6,7-dimethyl-8-ribityllumazine by condensation of 5-amino-6-(D-ribitylamino)uracil with 3,4-dihydroxy-2-butanone 4-phosphate. This is the penultimate step in the biosynthesis of riboflavin. In Synechococcus sp. (strain WH7803), this protein is 6,7-dimethyl-8-ribityllumazine synthase.